We begin with the raw amino-acid sequence, 596 residues long: Uptake hydrogenase large subunit (596 aa).

Cys-75, Cys-78, Cys-575, and Cys-578 together coordinate Ni(2+).

The protein belongs to the [NiFe]/[NiFeSe] hydrogenase large subunit family. As to quaternary structure, heterodimer of a large and a small subunit. The cofactor is Ni(2+).

It is found in the cell membrane. It carries out the reaction H2 + A = AH2. This enzyme recycles the H(2) produced by nitrogenase to increase the production of ATP and to protect nitrogenase against inhibition or damage by O(2) under carbon- or phosphate-limited conditions. In Bradyrhizobium diazoefficiens (strain JCM 10833 / BCRC 13528 / IAM 13628 / NBRC 14792 / USDA 110), this protein is Uptake hydrogenase large subunit (hupB).